The sequence spans 682 residues: Glutamine--fructose-6-phosphate aminotransferase [isomerizing] 2 (682 aa).

Cys2 serves as the catalytic For GATase activity. In terms of domain architecture, Glutamine amidotransferase type-2 spans 2–288; the sequence is CGIFAYMNYR…DDDIAAVADG (287 aa). Ser244 carries the phosphoserine modification. 2 consecutive SIS domains span residues 360–499 and 531–672; these read HLKE…DRIS and LALE…VDFP. Substrate-binding positions include 377 to 378, 422 to 424, Thr427, and His578; these read TS and SQS.

It carries out the reaction D-fructose 6-phosphate + L-glutamine = D-glucosamine 6-phosphate + L-glutamate. Its pathway is nucleotide-sugar biosynthesis; UDP-N-acetyl-alpha-D-glucosamine biosynthesis; alpha-D-glucosamine 6-phosphate from D-fructose 6-phosphate: step 1/1. Its function is as follows. Controls the flux of glucose into the hexosamine pathway. Most likely involved in regulating the availability of precursors for N- and O-linked glycosylation of proteins. This is Glutamine--fructose-6-phosphate aminotransferase [isomerizing] 2 (Gfpt2) from Mus musculus (Mouse).